Consider the following 152-residue polypeptide: Small ribosomal subunit protein uS15 (152 aa).

Belongs to the universal ribosomal protein uS15 family. As to quaternary structure, part of the 30S ribosomal subunit.

In Methanospirillum hungatei JF-1 (strain ATCC 27890 / DSM 864 / NBRC 100397 / JF-1), this protein is Small ribosomal subunit protein uS15.